Reading from the N-terminus, the 285-residue chain is ATP phosphoribosyltransferase (285 aa).

Belongs to the ATP phosphoribosyltransferase family. Long subfamily. The cofactor is Mg(2+).

Its subcellular location is the cytoplasm. It carries out the reaction 1-(5-phospho-beta-D-ribosyl)-ATP + diphosphate = 5-phospho-alpha-D-ribose 1-diphosphate + ATP. It participates in amino-acid biosynthesis; L-histidine biosynthesis; L-histidine from 5-phospho-alpha-D-ribose 1-diphosphate: step 1/9. Feedback inhibited by histidine. Catalyzes the condensation of ATP and 5-phosphoribose 1-diphosphate to form N'-(5'-phosphoribosyl)-ATP (PR-ATP). Has a crucial role in the pathway because the rate of histidine biosynthesis seems to be controlled primarily by regulation of HisG enzymatic activity. The sequence is that of ATP phosphoribosyltransferase from Metallosphaera sedula (strain ATCC 51363 / DSM 5348 / JCM 9185 / NBRC 15509 / TH2).